A 742-amino-acid chain; its full sequence is Synaptic vesicle glycoprotein 2A (742 aa).

Positions 1-57 (MEEGFRDRAAFIRGAKDIAKEVKKHAAKKVVKGLDRVQDEYSRRSYSRFEEEDDDDD) are interaction with SYT1. Over 1–169 (MEEGFRDRAA…GHGRFQWTLY (169 aa)) the chain is Cytoplasmic. Residues 40–49 (EYSRRSYSRF) show a composition bias toward basic and acidic residues. Positions 40–145 (EYSRRSYSRF…RGEAQRRKDR (106 aa)) are disordered. Phosphoserine is present on residues S80 and S81. T84 is modified (phosphothreonine). Positions 122–137 (VRGGLSDGEGPPGGRG) are enriched in gly residues. S127 bears the Phosphoserine mark. The chain crosses the membrane as a helical span at residues 170–190 (FVLGLALMADGVEVFVVGFVL). At 191–205 (PSAEKDMCLSDSNKG) the chain is on the extracellular side. Residues 206–226 (MLGLIVYLGMMVGAFLWGGLA) traverse the membrane as a helical segment. The Cytoplasmic segment spans residues 227 to 233 (DRLGRRQ). A helical membrane pass occupies residues 234–254 (CLLISLSVNSVFAFFSSFVQG). Topologically, residues 255–262 (YGTFLFCR) are extracellular. The helical transmembrane segment at 263–283 (LLSGVGIGGSIPIVFSYFSEF) threads the bilayer. The Cytoplasmic segment spans residues 284–294 (LAQEKRGEHLS). The helical transmembrane segment at 295-315 (WLCMFWMIGGVYAAAMAWAII) threads the bilayer. The Extracellular portion of the chain corresponds to 316 to 334 (PHYGWSFQMGSAYQFHSWR). A helical transmembrane segment spans residues 335-355 (VFVLVCAFPSVFAIGALTTQP). The Cytoplasmic portion of the chain corresponds to 356–447 (ESPRFFLENG…CFSPEYRRIT (92 aa)). At S393 the chain carries Phosphoserine. The helical transmembrane segment at 448 to 468 (LMMMGVWFTMSFSYYGLTVWF) threads the bilayer. Over 469 to 598 (PDMIRHLQAV…GTGEGAYMVY (130 aa)) the chain is Extracellular. At Y480 the chain carries Phosphotyrosine. N498, N548, and N573 each carry an N-linked (GlcNAc...) asparagine glycan. Residues 599 to 619 (FVSFLGTLAVLPGNIVSALLM) form a helical membrane-spanning segment. The Cytoplasmic segment spans residues 620-626 (DKIGRLR). The helical transmembrane segment at 627-647 (MLAGSSVLSCVSCFFLSFGNS) threads the bilayer. At 648–651 (ESAM) the chain is on the extracellular side. Residues 652 to 672 (IALLCLFGGVSIASWNALDVL) traverse the membrane as a helical segment. At 673–685 (TVELYPSDKRTTA) the chain is on the cytoplasmic side. The helical transmembrane segment at 686–708 (FGFLNALCKLAAVLGISIFTSFV) threads the bilayer. Residues 709-712 (GITK) are Extracellular-facing. Residues 713 to 731 (AAPILFASAALALGSSLAL) traverse the membrane as a helical segment. Over 732–742 (KLPETRGQVLQ) the chain is Cytoplasmic.

This sequence belongs to the major facilitator superfamily. In terms of assembly, interacts with SYT1/synaptotagmin-1 in a calcium-dependent manner. Binds the adapter protein complex AP-2. (Microbial infection) Interacts with C.botulinum neurotoxin type A (BoNT/A, botA). Post-translationally, phosphorylation by CK1 of the N-terminal cytoplasmic domain regulates interaction with SYT1. In terms of processing, N-glycosylated. As to expression, expressed in conventional synapses and cone ribbon synapses in the retina (at protein level). Expressed in diaphragm motor nerve terminals (at protein level). Expressed in hippocampus neurons (at protein level).

It localises to the presynapse. The protein resides in the cytoplasmic vesicle. It is found in the secretory vesicle. The protein localises to the synaptic vesicle membrane. Plays a role in the control of regulated secretion in neural and endocrine cells, enhancing selectively low-frequency neurotransmission. Positively regulates vesicle fusion by maintaining the readily releasable pool of secretory vesicles. Functionally, (Microbial infection) Receptor for C.botulinum neurotoxin type A (BoNT/A, botA); the toxin probably binds via extracellular loop 4. In terms of biological role, (Microbial infection) Possible receptor for C.botulinum neurotoxin type D (BoNT/D, botD); BoNT/D does not bind to extracellular loop 4 as do BoNT/A and BoNT/E. Its function is as follows. (Microbial infection) Receptor for C.botulinum neurotoxin type E (BoNT/E); the toxin probably binds via extracellular loop 4. It probably requires glycosylation of Asn-573. The chain is Synaptic vesicle glycoprotein 2A (Sv2a) from Mus musculus (Mouse).